Consider the following 269-residue polypeptide: MSVLDEIIDGVRADLAERQARVSLDELKERAAKARPAKDGVAALRGDGVKVICEVKRSSPSKGALAAIADPAGLAADYEAGGAAVISVLTEERRFGGSLADLDSVRARVDIPVLRKDFIVTSYQLWEARAHGADLVLLIVAALEQPALESLIERAESIGLTPLVEVHDEDEVERAVDAGAKVIGVNARNLKTLEVDRGTFERVAPEIPAHIVKVAESGVRGPHDLIAYANEGADAVLVGESLVTGRDPKTAVSDLVAAGEHPALRHGRS.

This sequence belongs to the TrpC family.

It carries out the reaction 1-(2-carboxyphenylamino)-1-deoxy-D-ribulose 5-phosphate + H(+) = (1S,2R)-1-C-(indol-3-yl)glycerol 3-phosphate + CO2 + H2O. Its pathway is amino-acid biosynthesis; L-tryptophan biosynthesis; L-tryptophan from chorismate: step 4/5. This Streptomyces coelicolor (strain ATCC BAA-471 / A3(2) / M145) protein is Indole-3-glycerol phosphate synthase 1 (trpC1).